The sequence spans 413 residues: Serine hydroxymethyltransferase (413 aa).

Residues L119 and G123–L125 contribute to the (6S)-5,6,7,8-tetrahydrofolate site. An N6-(pyridoxal phosphate)lysine modification is found at K228. A (6S)-5,6,7,8-tetrahydrofolate-binding site is contributed by E243.

It belongs to the SHMT family. As to quaternary structure, homodimer. Requires pyridoxal 5'-phosphate as cofactor.

It is found in the cytoplasm. It carries out the reaction (6R)-5,10-methylene-5,6,7,8-tetrahydrofolate + glycine + H2O = (6S)-5,6,7,8-tetrahydrofolate + L-serine. The protein operates within one-carbon metabolism; tetrahydrofolate interconversion. It participates in amino-acid biosynthesis; glycine biosynthesis; glycine from L-serine: step 1/1. Catalyzes the reversible interconversion of serine and glycine with tetrahydrofolate (THF) serving as the one-carbon carrier. This reaction serves as the major source of one-carbon groups required for the biosynthesis of purines, thymidylate, methionine, and other important biomolecules. Also exhibits THF-independent aldolase activity toward beta-hydroxyamino acids, producing glycine and aldehydes, via a retro-aldol mechanism. In Desulforamulus reducens (strain ATCC BAA-1160 / DSM 100696 / MI-1) (Desulfotomaculum reducens), this protein is Serine hydroxymethyltransferase.